Consider the following 397-residue polypeptide: Phosphoglycerate kinase (397 aa).

Residues 21–23 (DFN), Arg36, 59–62 (HCGR), Arg118, and Arg151 contribute to the substrate site. Residues Lys201, Glu323, and 353 to 356 (GGDT) contribute to the ATP site.

The protein belongs to the phosphoglycerate kinase family. Monomer.

The protein resides in the cytoplasm. The enzyme catalyses (2R)-3-phosphoglycerate + ATP = (2R)-3-phospho-glyceroyl phosphate + ADP. It participates in carbohydrate degradation; glycolysis; pyruvate from D-glyceraldehyde 3-phosphate: step 2/5. The chain is Phosphoglycerate kinase from Bartonella tribocorum (strain CIP 105476 / IBS 506).